The following is a 280-amino-acid chain: 3-methyl-2-oxobutanoate hydroxymethyltransferase (280 aa).

The Mg(2+) site is built by Asp-60 and Asp-99. 3-methyl-2-oxobutanoate contacts are provided by residues 60–61 (DS), Asp-99, and Lys-129. Position 131 (Glu-131) interacts with Mg(2+). Glu-198 (proton acceptor) is an active-site residue.

The protein belongs to the PanB family. Homodecamer; pentamer of dimers. It depends on Mg(2+) as a cofactor.

It is found in the cytoplasm. It carries out the reaction 3-methyl-2-oxobutanoate + (6R)-5,10-methylene-5,6,7,8-tetrahydrofolate + H2O = 2-dehydropantoate + (6S)-5,6,7,8-tetrahydrofolate. The protein operates within cofactor biosynthesis; (R)-pantothenate biosynthesis; (R)-pantoate from 3-methyl-2-oxobutanoate: step 1/2. Functionally, catalyzes the reversible reaction in which hydroxymethyl group from 5,10-methylenetetrahydrofolate is transferred onto alpha-ketoisovalerate to form ketopantoate. In Thermobifida fusca (strain YX), this protein is 3-methyl-2-oxobutanoate hydroxymethyltransferase.